A 181-amino-acid chain; its full sequence is Inner membrane-spanning protein YciB (181 aa).

The next 5 membrane-spanning stretches (helical) occupy residues 22–42 (IYTATGALIIATAIQLVVTYA), 50–70 (MQLITFIMVTVFGGMTIFLHD), 80–100 (IVYCVFAAGLIIAHILGKPVI), 122–142 (WVLFFTVCAIANLYVAFEMPL), and 148–168 (FKVFGLLGLTFLYTLFTGMYV).

Belongs to the YciB family.

The protein localises to the cell inner membrane. Plays a role in cell envelope biogenesis, maintenance of cell envelope integrity and membrane homeostasis. This chain is Inner membrane-spanning protein YciB, found in Aliivibrio fischeri (strain MJ11) (Vibrio fischeri).